The sequence spans 745 residues: Pentatricopeptide repeat-containing protein At1g71420 (745 aa).

PPR repeat units lie at residues 58–88 (SQQA…MLSH), 95–125 (NVIL…MPER), 126–160 (NVVS…CFPN), 191–224 (SIYV…IKFK), 225–259 (NLVT…GVGF), 260–296 (DRAT…TVKS), 301–332 (QTEV…MSHC), 334–367 (DIVA…KLSP), 368–402 (DWYT…GFLA), 403–437 (DTVL…DVVS), 438–464 (WNSM…MDIN), 466–496 (DSAT…MFEK), and 502–532 (QLNH…MPMD). A type E motif region spans residues 537–613 (VWIALLGSCR…EPDLSWTEIG (77 aa)). Positions 614–644 (NKVHEFASGGRHRPDKEAVYRELKRLISWLK) are type E(+) motif. Positions 645-745 (EMGYVPEMRS…DSSCSCNDYW (101 aa)) are type DYW motif.

The protein belongs to the PPR family. PCMP-H subfamily.

The polypeptide is Pentatricopeptide repeat-containing protein At1g71420 (PCMP-H70) (Arabidopsis thaliana (Mouse-ear cress)).